Reading from the N-terminus, the 995-residue chain is Secreted protein CSS1 (995 aa).

The N-terminal stretch at 1-23 is a signal peptide; it reads MFNRLNKFQAALALALYSQSALG. The Methyl-accepting transducer domain occupies 26-253; the sequence is YSNSTSISSN…GVSSSGSQSV (228 aa). N-linked (GlcNAc...) asparagine glycosylation is found at Asn28 and Asn35. The disordered stretch occupies residues 98–276; that stretch reads SSSSVSDVSS…TSSASTASGS (179 aa). N-linked (GlcNAc...) asparagine glycans are attached at residues Asn468 and Asn664.

Belongs to the SRP1/TIP1 family.

It is found in the secreted. Its function is as follows. Secreted protein that may be involved in cell wall organization and biosynthesis. The polypeptide is Secreted protein CSS1 (Saccharomyces cerevisiae (strain ATCC 204508 / S288c) (Baker's yeast)).